Reading from the N-terminus, the 500-residue chain is NAD(P)H-quinone oxidoreductase chain 4, chloroplastic (500 aa).

Helical transmembrane passes span 4 to 24 (FPWLTILVVLPIFAGSLIFFL), 37 to 57 (ISICLLEFLLMTYAFCYHFQL), 87 to 107 (LGSILLTGFITTLATLAAWPI), 113 to 130 (LFYFLMLAMYSGQIGLFS), 134 to 154 (LLLFFIMWELELIPVYLLLSM), 167 to 187 (FILYTAGGSIFFLIGVLGMGL), 211 to 231 (ILLYFGFLIAYAVKLPIIPLH), 242 to 262 (HYSTCMLLAGILLKMGAYGLI), 272 to 292 (AHYLFSPWLVIIGAIQIIYAA), 313 to 333 (MGFIIIGIGSITNIGLNGAIL), 334 to 354 (QILSHGFIGATLFFLAGTASD), 386 to 406 (LALPGMSGFVAELVVFFGLIT), 417 to 437 (LITFVMAIGMILTPIYLLSML), and 462 to 482 (LFILICIFLPVIGIGIYPDFV).

The protein belongs to the complex I subunit 4 family.

It localises to the plastid. The protein localises to the chloroplast thylakoid membrane. It catalyses the reaction a plastoquinone + NADH + (n+1) H(+)(in) = a plastoquinol + NAD(+) + n H(+)(out). The catalysed reaction is a plastoquinone + NADPH + (n+1) H(+)(in) = a plastoquinol + NADP(+) + n H(+)(out). The protein is NAD(P)H-quinone oxidoreductase chain 4, chloroplastic (ndhD) of Triticum aestivum (Wheat).